The primary structure comprises 307 residues: Protein TIPIN homolog (307 aa).

Disordered regions lie at residues 1–50 (MASL…SQDA) and 252–279 (ASMD…LSNE). Residues 262–271 (PLPPSQPPTP) are compositionally biased toward pro residues.

Belongs to the CSM3 family.

Its subcellular location is the cytoplasm. It localises to the nucleus. Functionally, required for normal progression of S-phase. Important for cell survival after DNA damage or replication stress. This is Protein TIPIN homolog from Drosophila melanogaster (Fruit fly).